An 888-amino-acid chain; its full sequence is uncharacterized protein (888 aa).

An N-terminal signal peptide occupies residues 1 to 20 (MKILKSLVLLVLFIVMPAKA). The next 6 helical transmembrane spans lie at 513–533 (IVKA…VAGA), 565–585 (TYFF…VVGA), 611–631 (LLFI…IITI), 649–669 (VIAF…IILM), 682–702 (ISTL…FLLI), and 781–801 (LLFY…NIVV).

This sequence belongs to the TrbL/VirB6 family.

The protein localises to the cell membrane. This is an uncharacterized protein from Rickettsia prowazekii (strain Madrid E).